The chain runs to 269 residues: 5'-nucleotidase SurE (269 aa).

Positions 11, 12, 43, and 101 each coordinate a divalent metal cation.

The protein belongs to the SurE nucleotidase family. A divalent metal cation is required as a cofactor.

The protein resides in the cytoplasm. The enzyme catalyses a ribonucleoside 5'-phosphate + H2O = a ribonucleoside + phosphate. Functionally, nucleotidase that shows phosphatase activity on nucleoside 5'-monophosphates. The sequence is that of 5'-nucleotidase SurE from Synechococcus sp. (strain WH7803).